Here is a 207-residue protein sequence, read N- to C-terminus: Urease accessory protein UreG (207 aa).

12–19 lines the GTP pocket; it reads GPVGAGKT.

It belongs to the SIMIBI class G3E GTPase family. UreG subfamily. As to quaternary structure, homodimer. UreD, UreF and UreG form a complex that acts as a GTP-hydrolysis-dependent molecular chaperone, activating the urease apoprotein by helping to assemble the nickel containing metallocenter of UreC. The UreE protein probably delivers the nickel.

It is found in the cytoplasm. Its function is as follows. Facilitates the functional incorporation of the urease nickel metallocenter. This process requires GTP hydrolysis, probably effectuated by UreG. This chain is Urease accessory protein UreG, found in Cereibacter sphaeroides (strain ATCC 17029 / ATH 2.4.9) (Rhodobacter sphaeroides).